The sequence spans 406 residues: Phosphopentomutase (406 aa).

6 residues coordinate Mn(2+): aspartate 10, aspartate 305, histidine 310, aspartate 346, histidine 347, and histidine 358.

The protein belongs to the phosphopentomutase family. Requires Mn(2+) as cofactor.

It is found in the cytoplasm. It catalyses the reaction 2-deoxy-alpha-D-ribose 1-phosphate = 2-deoxy-D-ribose 5-phosphate. It carries out the reaction alpha-D-ribose 1-phosphate = D-ribose 5-phosphate. It participates in carbohydrate degradation; 2-deoxy-D-ribose 1-phosphate degradation; D-glyceraldehyde 3-phosphate and acetaldehyde from 2-deoxy-alpha-D-ribose 1-phosphate: step 1/2. Its function is as follows. Isomerase that catalyzes the conversion of deoxy-ribose 1-phosphate (dRib-1-P) and ribose 1-phosphate (Rib-1-P) to deoxy-ribose 5-phosphate (dRib-5-P) and ribose 5-phosphate (Rib-5-P), respectively. This chain is Phosphopentomutase, found in Vibrio campbellii (strain ATCC BAA-1116).